The chain runs to 321 residues: Lipoyl synthase (321 aa).

[4Fe-4S] cluster-binding residues include Cys-68, Cys-73, Cys-79, Cys-94, Cys-98, Cys-101, and Ser-308. The Radical SAM core domain occupies 80-297; it reads FNHGTATFMI…KAEAMAMGFT (218 aa).

The protein belongs to the radical SAM superfamily. Lipoyl synthase family. It depends on [4Fe-4S] cluster as a cofactor.

Its subcellular location is the cytoplasm. The catalysed reaction is [[Fe-S] cluster scaffold protein carrying a second [4Fe-4S](2+) cluster] + N(6)-octanoyl-L-lysyl-[protein] + 2 oxidized [2Fe-2S]-[ferredoxin] + 2 S-adenosyl-L-methionine + 4 H(+) = [[Fe-S] cluster scaffold protein] + N(6)-[(R)-dihydrolipoyl]-L-lysyl-[protein] + 4 Fe(3+) + 2 hydrogen sulfide + 2 5'-deoxyadenosine + 2 L-methionine + 2 reduced [2Fe-2S]-[ferredoxin]. The protein operates within protein modification; protein lipoylation via endogenous pathway; protein N(6)-(lipoyl)lysine from octanoyl-[acyl-carrier-protein]: step 2/2. Its function is as follows. Catalyzes the radical-mediated insertion of two sulfur atoms into the C-6 and C-8 positions of the octanoyl moiety bound to the lipoyl domains of lipoate-dependent enzymes, thereby converting the octanoylated domains into lipoylated derivatives. In Yersinia enterocolitica serotype O:8 / biotype 1B (strain NCTC 13174 / 8081), this protein is Lipoyl synthase.